The chain runs to 342 residues: S-adenosylmethionine:tRNA ribosyltransferase-isomerase (342 aa).

Belongs to the QueA family. In terms of assembly, monomer.

The protein localises to the cytoplasm. The enzyme catalyses 7-aminomethyl-7-carbaguanosine(34) in tRNA + S-adenosyl-L-methionine = epoxyqueuosine(34) in tRNA + adenine + L-methionine + 2 H(+). The protein operates within tRNA modification; tRNA-queuosine biosynthesis. Functionally, transfers and isomerizes the ribose moiety from AdoMet to the 7-aminomethyl group of 7-deazaguanine (preQ1-tRNA) to give epoxyqueuosine (oQ-tRNA). This Bacillus velezensis (strain DSM 23117 / BGSC 10A6 / LMG 26770 / FZB42) (Bacillus amyloliquefaciens subsp. plantarum) protein is S-adenosylmethionine:tRNA ribosyltransferase-isomerase.